Consider the following 61-residue polypeptide: Conotoxin Tx-D021 (61 aa).

The signal sequence occupies residues 1–22 (MRCLPVFVILLLLIASTPSVDA). A propeptide spanning residues 23–48 (RAKTRDDMSLASFHDDAKRILQILQD) is cleaved from the precursor. At Cys-60 the chain carries Cysteine amide.

The protein belongs to the conotoxin T superfamily. Post-translationally, contains 2 disulfide bonds that can be either 'C1-C3, C2-C4' or 'C1-C4, C2-C3', since these disulfide connectivities have been observed for conotoxins with cysteine framework V (for examples, see AC P0DQQ7 and AC P81755). In terms of tissue distribution, expressed by the venom duct.

Its subcellular location is the secreted. This chain is Conotoxin Tx-D021, found in Conus textile (Cloth-of-gold cone).